An 83-amino-acid chain; its full sequence is Hainantoxin-III 2 (83 aa).

The signal sequence occupies residues 1-21; it reads MKASMYLALAGLVLLFVVGYA. Residues 22–48 constitute a propeptide that is removed on maturation; it reads SESEEKEFPRELLSKIFAVDDFKGEER. Disulfide bonds link C50/C65, C57/C70, and C64/C77. At L81 the chain carries Leucine amide.

The protein belongs to the neurotoxin 10 (Hwtx-1) family. 15 (Hntx-3) subfamily. In terms of assembly, monomer. In terms of tissue distribution, expressed by the venom gland.

It is found in the secreted. In terms of biological role, selective antagonist of neuronal tetrodotoxin (TTX)-sensitive voltage-gated sodium channels (IC(50)=1270 nM on Nav1.1/SCN1A, 270 nM on Nav1.2/SCN2A, 491 nM on Nav1.3/SCN3A and 232 nM on Nav1.7/SCN9A). This toxin suppress Nav1.7 current amplitude without significantly altering the activation, inactivation, and repriming kinetics. Short extreme depolarizations partially activate the toxin-bound channel, indicating voltage-dependent inhibition of this toxin. This toxin increases the deactivation of the Nav1.7 current after extreme depolarizations. The toxin-Nav1.7 complex is gradually dissociated upon prolonged strong depolarizations in a voltage-dependent manner, and the unbound toxin rebinds to Nav1.7 after a long repolarization. Moreover, analysis of chimeric channels showed that the DIIS3-S4 linker is critical for toxin binding to Nav1.7. These data are consistent with this toxin interacting with Nav1.7 site 4 and trapping the domain II voltage sensor in the closed state. This is Hainantoxin-III 2 from Cyriopagopus hainanus (Chinese bird spider).